Here is a 172-residue protein sequence, read N- to C-terminus: 3-hydroxydecanoyl-[acyl-carrier-protein] dehydratase (172 aa).

The active site involves H71.

The protein belongs to the thioester dehydratase family. FabA subfamily. Homodimer.

The protein resides in the cytoplasm. The enzyme catalyses a (3R)-hydroxyacyl-[ACP] = a (2E)-enoyl-[ACP] + H2O. It carries out the reaction (3R)-hydroxydecanoyl-[ACP] = (2E)-decenoyl-[ACP] + H2O. It catalyses the reaction (2E)-decenoyl-[ACP] = (3Z)-decenoyl-[ACP]. Its pathway is lipid metabolism; fatty acid biosynthesis. Functionally, necessary for the introduction of cis unsaturation into fatty acids. Catalyzes the dehydration of (3R)-3-hydroxydecanoyl-ACP to E-(2)-decenoyl-ACP and then its isomerization to Z-(3)-decenoyl-ACP. Can catalyze the dehydratase reaction for beta-hydroxyacyl-ACPs with saturated chain lengths up to 16:0, being most active on intermediate chain length. This is 3-hydroxydecanoyl-[acyl-carrier-protein] dehydratase from Brucella anthropi (strain ATCC 49188 / DSM 6882 / CCUG 24695 / JCM 21032 / LMG 3331 / NBRC 15819 / NCTC 12168 / Alc 37) (Ochrobactrum anthropi).